We begin with the raw amino-acid sequence, 98 residues long: NADH-ubiquinone oxidoreductase chain 4L (98 aa).

Helical transmembrane passes span 2-22 (SPAVLNITMAFTFSLLGTLMF), 26-46 (LMSTLLCLEGMMLSLFMLATI), and 59-79 (IPIAILVFAACEAAVGLALLA).

The protein belongs to the complex I subunit 4L family. In terms of assembly, core subunit of respiratory chain NADH dehydrogenase (Complex I) which is composed of 45 different subunits.

It localises to the mitochondrion inner membrane. The catalysed reaction is a ubiquinone + NADH + 5 H(+)(in) = a ubiquinol + NAD(+) + 4 H(+)(out). Core subunit of the mitochondrial membrane respiratory chain NADH dehydrogenase (Complex I) which catalyzes electron transfer from NADH through the respiratory chain, using ubiquinone as an electron acceptor. Part of the enzyme membrane arm which is embedded in the lipid bilayer and involved in proton translocation. The polypeptide is NADH-ubiquinone oxidoreductase chain 4L (MT-ND4L) (Alexandromys kikuchii (Taiwan vole)).